Consider the following 451-residue polypeptide: uncharacterized protein (451 aa).

Disordered regions lie at residues 89-150 (PRLS…ISRY) and 164-222 (QVGE…KTFG). Residues 104-121 (QKPTISRESFVWESSASI) are compositionally biased toward polar residues. A compositionally biased stretch (low complexity) spans 137–147 (SSTPSIEPESI). The span at 175 to 222 (RAADSENERRPSEVREAPESRRRRETSETGSDKSKAPPPIKEIKKTFG) shows a compositional bias: basic and acidic residues. The chain crosses the membrane as a helical span at residues 358–376 (LIGLMLFQTTIFIISKIIA). The disordered stretch occupies residues 401–451 (RNGSSSGFASGTSSPLVFIPRTKRPSLVPSEKKMRGPSVTRDLAAEQERDA). The segment covering 403 to 414 (GSSSGFASGTSS) has biased composition (low complexity).

This sequence belongs to the IIV-6 067R family.

The protein resides in the membrane. This is an uncharacterized protein from Invertebrate iridescent virus 3 (IIV-3).